The primary structure comprises 255 residues: Small ribosomal subunit protein uS2 (255 aa).

Belongs to the universal ribosomal protein uS2 family.

The chain is Small ribosomal subunit protein uS2 from Streptococcus pyogenes serotype M49 (strain NZ131).